The chain runs to 100 residues: Small ribosomal subunit protein uS14c (100 aa).

The protein belongs to the universal ribosomal protein uS14 family. As to quaternary structure, part of the 30S ribosomal subunit.

It localises to the plastid. The protein localises to the chloroplast. Binds 16S rRNA, required for the assembly of 30S particles. This Liriodendron tulipifera (Tuliptree) protein is Small ribosomal subunit protein uS14c.